The chain runs to 118 residues: Large ribosomal subunit protein bL20 (118 aa).

It belongs to the bacterial ribosomal protein bL20 family.

Binds directly to 23S ribosomal RNA and is necessary for the in vitro assembly process of the 50S ribosomal subunit. It is not involved in the protein synthesizing functions of that subunit. The chain is Large ribosomal subunit protein bL20 from Protochlamydia amoebophila (strain UWE25).